A 458-amino-acid polypeptide reads, in one-letter code: Argininosuccinate lyase (458 aa).

Belongs to the lyase 1 family. Argininosuccinate lyase subfamily.

It localises to the cytoplasm. It catalyses the reaction 2-(N(omega)-L-arginino)succinate = fumarate + L-arginine. It participates in amino-acid biosynthesis; L-arginine biosynthesis; L-arginine from L-ornithine and carbamoyl phosphate: step 3/3. The protein is Argininosuccinate lyase of Lachnospira eligens (strain ATCC 27750 / DSM 3376 / VPI C15-48 / C15-B4) (Eubacterium eligens).